The primary structure comprises 187 residues: Peroxisome assembly protein 22 (187 aa).

The helical transmembrane segment at 7 to 29 (NTFFGLAALGALGLGYSVYKSFI) threads the bilayer.

This sequence belongs to the peroxin-22 family. Interacts with PEX4.

Its subcellular location is the peroxisome membrane. Involved in peroxisome biogenesis. The sequence is that of Peroxisome assembly protein 22 (PEX22) from Komagataella pastoris (Yeast).